The sequence spans 160 residues: MAQESWKKEAEETGVHTPEAPILCVNNCGFFGSRMTENMCSKCYRDTVKAKTVATVVEKKPLASLSSTPLVTEVTDGGSGSVADGKQVMEEDTPKPPSNRCLSCRKKVGLTGFKCRCGGTFCSMHRYADSHKCTFDYKQVGREQIAKQNPLVKADKITKI.

The A20-type zinc-finger motif lies at 18 to 52 (PEAPILCVNNCGFFGSRMTENMCSKCYRDTVKAKT). Zn(2+) contacts are provided by Cys-24, Cys-28, Cys-40, and Cys-43. A disordered region spans residues 73–94 (EVTDGGSGSVADGKQVMEEDTP). The segment at 95–141 (KPPSNRCLSCRKKVGLTGFKCRCGGTFCSMHRYADSHKCTFDYKQVG) adopts an AN1-type zinc-finger fold. 8 residues coordinate Zn(2+): Cys-101, Cys-104, Cys-115, Cys-117, Cys-122, His-125, His-131, and Cys-133.

In terms of biological role, may be involved in environmental stress response. In Oryza sativa subsp. japonica (Rice), this protein is Zinc finger A20 and AN1 domain-containing stress-associated protein 6 (SAP6).